A 572-amino-acid polypeptide reads, in one-letter code: Probable transporter MCH1 (572 aa).

Over residues 1–29 (MSSSAPDDTQASRLDADQISTRSSSYASD) the composition is skewed to polar residues. The tract at residues 1 to 39 (MSSSAPDDTQASRLDADQISTRSSSYASDNDTDSTETRI) is disordered. Residue Asn30 is glycosylated (N-linked (GlcNAc...) asparagine). The next 10 helical transmembrane spans lie at 50 to 70 (LLAF…VVFS), 89 to 109 (AVAI…GYIC), 116 to 136 (PLAL…AGVY), 159 to 179 (FLML…MAAV), 193 to 213 (GLAL…LSQA), 232 to 252 (VFRF…LGTF), 335 to 355 (LAFL…GTII), 426 to 446 (FMAF…SGLV), 459 to 479 (LVGA…TIIW), and 488 to 508 (YGLI…VYSA). N-linked (GlcNAc...) asparagine glycosylation is present at Asn515. The helical transmembrane segment at 539 to 559 (PTYWAETITVWIAVGLLLWAW) threads the bilayer.

The protein belongs to the major facilitator superfamily.

It is found in the vacuole membrane. Probable transporter. The protein is Probable transporter MCH1 (MCH1) of Gibberella zeae (strain ATCC MYA-4620 / CBS 123657 / FGSC 9075 / NRRL 31084 / PH-1) (Wheat head blight fungus).